The sequence spans 358 residues: MAFTLEEIVQRFGGEIVGDRAHRVGNLAPLDQAGPDQLAFLANPKYLAQVETTRAGAVLINAADLAKLASPDGRNFIVTPNPYAYFARLAQAFIDMATPKAKRGVHPSATVDSSAQIAATAVIGPNVTVEAGVAIGENVRLDANVFVGRGTTIGAGSHLYPNVAVYHGCRLGERAIVHAGAVIGSDGFGFAPDFVGDGDARTGSWVKIPQVGGVSIGPDVEIGANTTIDRGAMADTVIEECVKIDNLVQIGHNCKIGAYTVIAGCAGIAGSTTIGRHCMIGGAVGIAGHVTLGDYVIVTAKSGVSKSLPKAGIYTSAFPAVDHADWNRSAALMRNLDKLRDRIKALEAAVASASGDKA.

The active-site Proton acceptor is the His252.

This sequence belongs to the transferase hexapeptide repeat family. LpxD subfamily. Homotrimer.

The enzyme catalyses a UDP-3-O-[(3R)-3-hydroxyacyl]-alpha-D-glucosamine + a (3R)-hydroxyacyl-[ACP] = a UDP-2-N,3-O-bis[(3R)-3-hydroxyacyl]-alpha-D-glucosamine + holo-[ACP] + H(+). It functions in the pathway bacterial outer membrane biogenesis; LPS lipid A biosynthesis. Its function is as follows. Catalyzes the N-acylation of UDP-3-O-acylglucosamine using 3-hydroxyacyl-ACP as the acyl donor. Is involved in the biosynthesis of lipid A, a phosphorylated glycolipid that anchors the lipopolysaccharide to the outer membrane of the cell. The sequence is that of UDP-3-O-acylglucosamine N-acyltransferase from Paraburkholderia phymatum (strain DSM 17167 / CIP 108236 / LMG 21445 / STM815) (Burkholderia phymatum).